The sequence spans 510 residues: NAD(P)H-quinone oxidoreductase subunit 2, chloroplastic (510 aa).

13 helical membrane-spanning segments follow: residues 26-46, 57-77, 99-119, 124-144, 149-169, 184-204, 227-247, 295-315, 323-343, 354-374, 395-415, 418-438, and 484-504; these read LFDGSFIFPECILIFGLILLL, IPWLYFISSTSLVMSIMALLF, IFQVLILLCSTLCIPLSVEYI, MAITEFLLFVLTATLGGMFLC, LITIFVAPECFSFCSYLLSGY, LLMGGASSSILVHGFSWLYGL, PGISIALIFITVGIGFKLSPA, WHLLLEILALLSMILGNLIAI, MLAYSSIGQIGYIIIGIIVGD, YMLFYISMNLGTFACIILFGL, ALSLALCLLSLGGLPPLAGFF, LYLFWCGWQAGLYFLVLIALV, and MIVCVIASTIPGISMNPIIAI.

Belongs to the complex I subunit 2 family. As to quaternary structure, NDH is composed of at least 16 different subunits, 5 of which are encoded in the nucleus.

The protein resides in the plastid. Its subcellular location is the chloroplast thylakoid membrane. It carries out the reaction a plastoquinone + NADH + (n+1) H(+)(in) = a plastoquinol + NAD(+) + n H(+)(out). The catalysed reaction is a plastoquinone + NADPH + (n+1) H(+)(in) = a plastoquinol + NADP(+) + n H(+)(out). Its function is as follows. NDH shuttles electrons from NAD(P)H:plastoquinone, via FMN and iron-sulfur (Fe-S) centers, to quinones in the photosynthetic chain and possibly in a chloroplast respiratory chain. The immediate electron acceptor for the enzyme in this species is believed to be plastoquinone. Couples the redox reaction to proton translocation, and thus conserves the redox energy in a proton gradient. In Trachelium caeruleum (Blue throatwort), this protein is NAD(P)H-quinone oxidoreductase subunit 2, chloroplastic.